We begin with the raw amino-acid sequence, 213 residues long: Cytochrome b6 (213 aa).

Residues 30-50 (IFYCLGGLTLLCFIIQCLTGV) traverse the membrane as a helical segment. Cys-33 contacts heme c. Residues His-84 and His-98 each coordinate heme b. The next 3 helical transmembrane spans lie at 88 to 108 (CQLM…TGAF), 114 to 134 (LNWV…FTGY), and 184 to 204 (LHVM…FIMI). Positions 185 and 200 each coordinate heme b.

It belongs to the cytochrome b family. PetB subfamily. In terms of assembly, the subunits of the cytochrome bc complex are a Rieske Fe-S protein (PetC), cytochrome b6 (PetB), subunit IV (PetD), and a diheme cytochrome c (PetX). It depends on heme b as a cofactor. The cofactor is heme c.

Its subcellular location is the cell membrane. In terms of biological role, component of the cytochrome bc complex which donates electrons to the photosynthetic reaction center. In Heliobacterium modesticaldum (strain ATCC 51547 / Ice1), this protein is Cytochrome b6.